We begin with the raw amino-acid sequence, 286 residues long: Beta-lactamase SHV-1 (286 aa).

Positions 1-21 (MRYIRLCIISLLATLPLAVHA) are cleaved as a signal peptide. Residue Ser66 is the Acyl-ester intermediate of the active site. Cys73 and Cys119 are joined by a disulfide. Glu164 serves as the catalytic Proton acceptor. Substrate is bound at residue 230-232 (KTG).

Belongs to the class-A beta-lactamase family.

The catalysed reaction is a beta-lactam + H2O = a substituted beta-amino acid. This chain is Beta-lactamase SHV-1 (bla), found in Escherichia coli.